A 312-amino-acid polypeptide reads, in one-letter code: Putative mitochondrial transporter UCP3 (312 aa).

Over M1–P10 the chain is Mitochondrial intermembrane. The chain crosses the membrane as a helical span at residues P11–F32. Solcar repeat units lie at residues P11–V105, S114–K206, and D215–A300. At P33–S76 the chain is on the mitochondrial matrix side. A helical transmembrane segment spans residues P77 to Y99. Over D100 to R119 the chain is Mitochondrial intermembrane. Residues I120–P136 form a helical membrane-spanning segment. Residues T137–L183 are Mitochondrial matrix-facing. Residues P184 to Y200 form a helical membrane-spanning segment. Topologically, residues D201 to F217 are mitochondrial intermembrane. The helical transmembrane segment at P218–P237 threads the bilayer. Over V238 to A271 the chain is Mitochondrial matrix. A helical transmembrane segment spans residues F272 to Y294. The interval S279–L301 is purine nucleotide binding. Residues E295 to F312 lie on the Mitochondrial intermembrane side of the membrane.

It belongs to the mitochondrial carrier (TC 2.A.29) family. In terms of assembly, interacts with HAX1; the interaction is direct and calcium-dependent. Only in skeletal muscle and heart. Also expressed in white and brown adipose tissues. Is more expressed in glycolytic than in oxidative skeletal muscles.

The protein resides in the mitochondrion inner membrane. Its activity is regulated as follows. The proton transporter activity is activated by fatty acids (in vitro). The proton transporter activity is inhibited by ATP and ADP (in vitro). The effect of Ubiquinone/coenzyme Q10 on the proton transporter activity in reconstituted membranes is unclear (in vitro). Its function is as follows. Putative transmembrane transporter that plays a role in mitochondrial metabolism via an as yet unclear mechanism. Originally, this mitochondrial protein was thought to act as a proton transmembrane transporter from the mitochondrial intermembrane space into the matrix, causing proton leaks through the inner mitochondrial membrane, thereby uncoupling mitochondrial membrane potential generation from ATP synthesis. However, this function is controversial and uncoupling may not be the function, or at least not the main function, but rather a consequence of more conventional metabolite transporter activity. This is Putative mitochondrial transporter UCP3 from Homo sapiens (Human).